Reading from the N-terminus, the 381-residue chain is Short-chain dehydrogenase anuD (381 aa).

6 residues coordinate NADP(+): isoleucine 84, lysine 109, aspartate 133, asparagine 158, tyrosine 244, and lysine 248. The Proton acceptor role is filled by tyrosine 244. Tyrosine 244 acts as the Proton donor in catalysis. The active-site Lowers pKa of active site Tyr is lysine 248.

It belongs to the short-chain dehydrogenases/reductases (SDR) family.

Its function is as follows. Highly reducing polyketide synthase; part of the gene cluster that mediates the biosynthesis of annullatin D, an alkylated aromatic polyketide with a fused dihydrobenzofuran lactone ring system that exhibits potent agonistic activities toward the cannabinoid receptors. AnuD does not seem to play a role within the pathway. The annullatin backbone 2-hydroxymethyl-3-pentylphenol is assembled from one acetyl-CoA starter unit and 5 malonyl-CoA elongation units by cooperation of the highly reducing polyketide synthase anuA, the short-chain dehydrogenase anuB and the oxidoreductase anuC, before being hydroxylated at the C-5 alkyl chain by the cytochrome P450 monooxygenase anuE to form (8S)-annullatin E. The prenyltransferase anuH subsequently installs one isoprenyl group at the benzene ring to form (8S)-annullatin J. Enzymatic or nonenzymatic dihydro-benzofuran ring formation between the prenyl and the phenolic hydroxyl groups in (8S)-annullatin J results in two diastereomers (2S,9S)-annullatin H and compound 12. The intermediate (2S,9S)-annullatin H is then converted to (2S,9S)-annullatin D by the FAD-linked oxidoreductase anuG-catalyzed five-member lactone ring formation. The isomer 12 acts as a substrate for the short-chain dehydrogenase anuF and is oxidized to (2R)-annullatin F, which is subsequently acetylated by an acetyltransferase leading to (2R)-annullatin G formation. The remaining enzymes identified within the cluster, anuD, anuI and anuJ, seem not to be involved in annullatin biosynthesis. The chain is Short-chain dehydrogenase anuD from Penicillium roqueforti (strain FM164).